Consider the following 1018-residue polypeptide: Serine/threonine-protein phosphatase BSL2 (1018 aa).

Residues 1–75 (MDEDSSMVAD…AAAVVGQEQQ (75 aa)) are disordered. The segment covering 41–57 (SPPPEGGSVPTPPPSDP) has biased composition (pro residues). Residues 63 to 75 (QQQAAAVVGQEQQ) are compositionally biased toward low complexity. 5 Kelch repeats span residues 149-195 (TSAG…VATA), 253-301 (YLMA…TASA), 306-356 (LLLL…VFVN), 362-409 (SGGA…DAAG), and 430-479 (LIFI…RLPG). Positions 569 to 590 (DRDCGAEATPSGKPTFSLIKPD) are disordered. The residue at position 627 (serine 627) is a Phosphoserine. Residues aspartate 720, histidine 722, aspartate 754, and asparagine 786 each coordinate Mn(2+). Histidine 787 (proton donor) is an active-site residue. Mn(2+)-binding residues include histidine 839 and histidine 918. At serine 975 the chain carries Phosphoserine. The span at 994–1011 (ANRPATPTRGRPQNSNDR) shows a compositional bias: polar residues. The tract at residues 994–1018 (ANRPATPTRGRPQNSNDRGGSLAWM) is disordered.

Belongs to the PPP phosphatase family. BSU subfamily. As to quaternary structure, interacts with BSK8. The cofactor is Mn(2+). As to expression, expressed throughout the plant, with a higher level in younger parts.

It localises to the cytoplasm. The protein localises to the cell membrane. Its subcellular location is the nucleus. It catalyses the reaction O-phospho-L-seryl-[protein] + H2O = L-seryl-[protein] + phosphate. The enzyme catalyses O-phospho-L-threonyl-[protein] + H2O = L-threonyl-[protein] + phosphate. Its function is as follows. Phosphatase involved in elongation process, probably by acting as a regulator of brassinolide signaling. The chain is Serine/threonine-protein phosphatase BSL2 (BSL2) from Arabidopsis thaliana (Mouse-ear cress).